A 253-amino-acid polypeptide reads, in one-letter code: 5'-nucleotidase SurE (253 aa).

Residues Asp8, Asp9, Ser40, and Asn93 each coordinate a divalent metal cation.

It belongs to the SurE nucleotidase family. A divalent metal cation is required as a cofactor.

It localises to the cytoplasm. The enzyme catalyses a ribonucleoside 5'-phosphate + H2O = a ribonucleoside + phosphate. Nucleotidase that shows phosphatase activity on nucleoside 5'-monophosphates. This chain is 5'-nucleotidase SurE, found in Methylobacterium sp. (strain 4-46).